We begin with the raw amino-acid sequence, 916 residues long: Inter-alpha-trypsin inhibitor heavy chain H4 (916 aa).

The first 27 residues, 1 to 27 (MKTPAPGRIHSIVLVLLSLAVLQTSKA), serve as a signal peptide directing secretion. The region spanning 28 to 149 (QKVQNDIDIY…KVTFELVYEE (122 aa)) is the VIT domain. N-linked (GlcNAc...) asparagine glycans are attached at residues asparagine 82 and asparagine 208. Positions 275 to 458 (NVIFVIDKSG…LQLQDFYQEV (184 aa)) constitute a VWFA domain. Asparagine 518 is a glycosylation site (N-linked (GlcNAc...) asparagine). Disordered stretches follow at residues 597 to 616 (PEGQ…ESRG) and 678 to 701 (PLAP…TDFR). Positions 678–689 (PLAPASAPSPTS) are enriched in low complexity. Serine 683 carries O-linked (GalNAc...) serine glycosylation. Residues threonine 705, threonine 706, and threonine 708 are each glycosylated (O-linked (GalNAc...) threonine). The cysteines at positions 733 and 911 are disulfide-linked.

This sequence belongs to the ITIH family. In terms of assembly, interacts (via C-terminus) with DNAJC1 (via SANT 2 domain). Appears to be both N- and O-glycosylated.

The protein resides in the secreted. Functionally, type II acute-phase protein (APP) involved in inflammatory responses to trauma. May also play a role in liver development or regeneration. The polypeptide is Inter-alpha-trypsin inhibitor heavy chain H4 (ITIH4) (Bos taurus (Bovine)).